We begin with the raw amino-acid sequence, 417 residues long: Gamma-glutamyl phosphate reductase (417 aa).

The protein belongs to the gamma-glutamyl phosphate reductase family.

Its subcellular location is the cytoplasm. It carries out the reaction L-glutamate 5-semialdehyde + phosphate + NADP(+) = L-glutamyl 5-phosphate + NADPH + H(+). Its pathway is amino-acid biosynthesis; L-proline biosynthesis; L-glutamate 5-semialdehyde from L-glutamate: step 2/2. Catalyzes the NADPH-dependent reduction of L-glutamate 5-phosphate into L-glutamate 5-semialdehyde and phosphate. The product spontaneously undergoes cyclization to form 1-pyrroline-5-carboxylate. In Enterococcus faecalis (strain ATCC 700802 / V583), this protein is Gamma-glutamyl phosphate reductase.